A 189-amino-acid chain; its full sequence is MTPERVPSVVFKTRVRDESVPGPNPYRWEDKTTEQIFGGKKVVLFSLPGAFTPTCSSNHLPRYEQLFEEFQALGVDDIICLSVNDAFVMFQWGKQIGADKVKLLPDGNGEFTRKMGMLVEKSNLGFGMRSWRYSMFVNDGKIEKMFIEPEFGDNCPVDPFECSDADTMLAYLKGAEAPGVSEPVKAFVG.

The 176-residue stretch at 2–177 (TPERVPSVVF…MLAYLKGAEA (176 aa)) folds into the Thioredoxin domain. Residue C55 is the Cysteine sulfenic acid (-SOH) intermediate (for peroxiredoxin activity) of the active site.

Belongs to the peroxiredoxin family. Prx5 subfamily. In terms of assembly, monomer.

The enzyme catalyses a hydroperoxide + 2 glutathione = an alcohol + glutathione disulfide + H2O. Its function is as follows. Thiol-specific peroxidase that catalyzes the reduction of hydrogen peroxide and organic hydroperoxides to water and alcohols, respectively. Plays a role in cell protection against oxidative stress by detoxifying peroxides. The protein is Peroxiredoxin sll1621 of Synechocystis sp. (strain ATCC 27184 / PCC 6803 / Kazusa).